The primary structure comprises 446 residues: Pre-rRNA-processing protein crb3/ipi3 (446 aa).

WD repeat units follow at residues 74-113 (ILPE…LIYF), 116-155 (AHYQ…DQNS), 172-214 (GHKR…LLTT), 216-257 (ALPS…SNNV), and 294-333 (SCQS…VLRR).

Belongs to the WD repeat IPI3/WDR18 family. As to quaternary structure, component of the RIX1 complex, composed of ipi1, rix1/ipi2 and crb3/ipi3 in a 1:2:2 stoichiometry. The complex interacts (via rix1) with mdn1 (via its hexameric AAA ATPase ring) and the pre-60S ribosome particles. Interacts with rix1, gcr3 and Las1.

The protein localises to the nucleus. The protein resides in the chromosome. Required for both pre-rRNA processing and heterochromatic gene silencing. In terms of biological role, component of the RIX1 complex required for processing of ITS2 sequences from 35S pre-rRNA. The protein is Pre-rRNA-processing protein crb3/ipi3 (crb3) of Schizosaccharomyces pombe (strain 972 / ATCC 24843) (Fission yeast).